A 274-amino-acid polypeptide reads, in one-letter code: Large ribosomal subunit protein uL2cz/uL2cy (274 aa).

Disordered regions lie at residues 1–23 (MAIH…SKVK) and 224–274 (NPVD…RRSK).

Belongs to the universal ribosomal protein uL2 family. Part of the 50S ribosomal subunit.

Its subcellular location is the plastid. The protein localises to the chloroplast. The sequence is that of Large ribosomal subunit protein uL2cz/uL2cy (rpl2-A) from Lactuca sativa (Garden lettuce).